Here is a 285-residue protein sequence, read N- to C-terminus: NADPH-dependent 7-cyano-7-deazaguanine reductase (285 aa).

91 to 93 (IES) contributes to the substrate binding site. 93 to 94 (SK) is an NADPH binding site. C193 functions as the Thioimide intermediate in the catalytic mechanism. The active-site Proton donor is D200. 232-233 (HE) contacts substrate. 261–262 (RG) provides a ligand contact to NADPH.

The protein belongs to the GTP cyclohydrolase I family. QueF type 2 subfamily. Homodimer.

It is found in the cytoplasm. It catalyses the reaction 7-aminomethyl-7-carbaguanine + 2 NADP(+) = 7-cyano-7-deazaguanine + 2 NADPH + 3 H(+). It participates in tRNA modification; tRNA-queuosine biosynthesis. Functionally, catalyzes the NADPH-dependent reduction of 7-cyano-7-deazaguanine (preQ0) to 7-aminomethyl-7-deazaguanine (preQ1). This chain is NADPH-dependent 7-cyano-7-deazaguanine reductase, found in Shewanella frigidimarina (strain NCIMB 400).